A 439-amino-acid chain; its full sequence is Agnestins biosynthesis cluster transcriptional coactivator AgnL9 (439 aa).

The 71-residue stretch at 79 to 149 (MTIQTQLLAC…EPGHITHSAL (71 aa)) folds into the HTH iclR-type domain. A DNA-binding region (H-T-H motif) is located at residues 109–128 (MKDVSELIDVPENQLGRIVR).

The protein localises to the nucleus. In terms of biological role, transcriptional coactivator; part of the gene cluster that mediates the biosynthesis of agnestins, dihydroxy-xanthone metabolites. The chain is Agnestins biosynthesis cluster transcriptional coactivator AgnL9 from Paecilomyces divaricatus (Penicillium divaricatum).